The following is a 568-amino-acid chain: Periplasmic trehalase (568 aa).

A signal peptide spans 1–39; it reads MPYATARSGDVMSSAAPPCCTSLLGLSLSMFVAPGTLTA. Substrate contacts are provided by residues arginine 169, 176 to 177, asparagine 213, 222 to 224, 294 to 296, and glycine 327; these read WD, RSQ, and RPE. Active-site proton donor/acceptor residues include aspartate 329 and glutamate 511. Glutamate 526 lines the substrate pocket.

It belongs to the glycosyl hydrolase 37 family.

The protein resides in the periplasm. The enzyme catalyses alpha,alpha-trehalose + H2O = alpha-D-glucose + beta-D-glucose. Functionally, provides the cells with the ability to utilize trehalose at high osmolarity by splitting it into glucose molecules that can subsequently be taken up by the phosphotransferase-mediated uptake system. In Xanthomonas axonopodis pv. citri (strain 306), this protein is Periplasmic trehalase.